The chain runs to 323 residues: Ribokinase (323 aa).

Substrate is bound by residues 26-28, 54-58, and glutamate 155; these read MTD and GKGAN. Residues asparagine 200, 236-241, and threonine 257 each bind ATP; that span reads TLGASG. Residues aspartate 264 and threonine 266 each coordinate K(+). ATP is bound by residues 269–270 and asparagine 296; that span reads GD. Position 270 (aspartate 270) interacts with substrate. The active-site Proton acceptor is aspartate 270. K(+) contacts are provided by serine 302, alanine 305, glycine 307, and serine 311.

This sequence belongs to the carbohydrate kinase PfkB family. Ribokinase subfamily. As to quaternary structure, homodimer. Mg(2+) is required as a cofactor.

Its subcellular location is the cytoplasm. It is found in the nucleus. The catalysed reaction is D-ribose + ATP = D-ribose 5-phosphate + ADP + H(+). It functions in the pathway carbohydrate metabolism; D-ribose degradation; D-ribose 5-phosphate from beta-D-ribopyranose: step 2/2. Its activity is regulated as follows. Activated by a monovalent cation that binds near, but not in, the active site. The most likely occupant of the site in vivo is potassium. Ion binding induces a conformational change that may alter substrate affinity. Competitively inhibited by phosphonoacetic acid, etidronate, 2-carboxethylphosphonic acid, N-(phosphonomethyl)glycine, N-(phosphonomethyl)iminodiacetic acid and clodronate. Its function is as follows. Catalyzes the phosphorylation of ribose at O-5 in a reaction requiring ATP and magnesium. The resulting D-ribose-5-phosphate can then be used either for sythesis of nucleotides, histidine, and tryptophan, or as a component of the pentose phosphate pathway. This is Ribokinase from Mus musculus (Mouse).